A 555-amino-acid polypeptide reads, in one-letter code: 2-isopropylmalate synthase (555 aa).

Residues 30–303 (PIWCSVDLRD…DPGLDCTDIN (274 aa)) enclose the Pyruvate carboxyltransferase domain. Mg(2+) contacts are provided by D39, H242, H244, and N278. Positions 437–555 (QPDARIKFVD…VSAANRVIAK (119 aa)) are regulatory domain.

It belongs to the alpha-IPM synthase/homocitrate synthase family. LeuA type 2 subfamily. As to quaternary structure, homodimer. Mg(2+) serves as cofactor.

It localises to the cytoplasm. It carries out the reaction 3-methyl-2-oxobutanoate + acetyl-CoA + H2O = (2S)-2-isopropylmalate + CoA + H(+). It participates in amino-acid biosynthesis; L-leucine biosynthesis; L-leucine from 3-methyl-2-oxobutanoate: step 1/4. Its function is as follows. Catalyzes the condensation of the acetyl group of acetyl-CoA with 3-methyl-2-oxobutanoate (2-ketoisovalerate) to form 3-carboxy-3-hydroxy-4-methylpentanoate (2-isopropylmalate). This chain is 2-isopropylmalate synthase, found in Brucella suis biovar 1 (strain 1330).